The chain runs to 516 residues: Maturase K (516 aa).

This sequence belongs to the intron maturase 2 family. MatK subfamily.

Its subcellular location is the plastid. The protein localises to the chloroplast. In terms of biological role, usually encoded in the trnK tRNA gene intron. Probably assists in splicing its own and other chloroplast group II introns. This is Maturase K from Galanthus nivalis (Common snowdrop).